Here is a 547-residue protein sequence, read N- to C-terminus: Type I inositol polyphosphate 5-phosphatase 4 (547 aa).

Basic and acidic residues predominate over residues 56–67; the sequence is CSVRKSKTETRS. A disordered region spans residues 56–80; that stretch reads CSVRKSKTETRSKRNSGRARRNKLD. Catalytic regions lie at residues 387–402 and 467–482; these read DRVI…IALS and KRRT…WHGS.

The protein belongs to the inositol polyphosphate 5-phosphatase family.

In Arabidopsis thaliana (Mouse-ear cress), this protein is Type I inositol polyphosphate 5-phosphatase 4.